The following is a 396-amino-acid chain: 1-deoxy-D-xylulose 5-phosphate reductoisomerase (396 aa).

NADPH contacts are provided by Thr13, Gly14, Ser15, Ile16, and Asn127. Lys128 contributes to the 1-deoxy-D-xylulose 5-phosphate binding site. An NADPH-binding site is contributed by Glu129. Position 153 (Asp153) interacts with Mn(2+). 4 residues coordinate 1-deoxy-D-xylulose 5-phosphate: Ser154, Glu155, Ser184, and His207. Glu155 is a binding site for Mn(2+). Position 213 (Gly213) interacts with NADPH. Residues Ser220, Asn225, Lys226, and Glu229 each coordinate 1-deoxy-D-xylulose 5-phosphate. Glu229 contributes to the Mn(2+) binding site.

This sequence belongs to the DXR family. Mg(2+) is required as a cofactor. Requires Mn(2+) as cofactor.

It catalyses the reaction 2-C-methyl-D-erythritol 4-phosphate + NADP(+) = 1-deoxy-D-xylulose 5-phosphate + NADPH + H(+). The protein operates within isoprenoid biosynthesis; isopentenyl diphosphate biosynthesis via DXP pathway; isopentenyl diphosphate from 1-deoxy-D-xylulose 5-phosphate: step 1/6. Its function is as follows. Catalyzes the NADPH-dependent rearrangement and reduction of 1-deoxy-D-xylulose-5-phosphate (DXP) to 2-C-methyl-D-erythritol 4-phosphate (MEP). The protein is 1-deoxy-D-xylulose 5-phosphate reductoisomerase of Pseudomonas syringae pv. syringae (strain B728a).